We begin with the raw amino-acid sequence, 239 residues long: Ribonuclease PH (239 aa).

Phosphate-binding positions include Arg-86 and 124 to 126 (GTR).

It belongs to the RNase PH family. As to quaternary structure, homohexameric ring arranged as a trimer of dimers.

The enzyme catalyses tRNA(n+1) + phosphate = tRNA(n) + a ribonucleoside 5'-diphosphate. Functionally, phosphorolytic 3'-5' exoribonuclease that plays an important role in tRNA 3'-end maturation. Removes nucleotide residues following the 3'-CCA terminus of tRNAs; can also add nucleotides to the ends of RNA molecules by using nucleoside diphosphates as substrates, but this may not be physiologically important. Probably plays a role in initiation of 16S rRNA degradation (leading to ribosome degradation) during starvation. The polypeptide is Ribonuclease PH (Rhizobium leguminosarum bv. trifolii (strain WSM2304)).